A 320-amino-acid polypeptide reads, in one-letter code: Pyrroline-5-carboxylate reductase 1, mitochondrial (320 aa).

Ser2 is subject to N-acetylserine. Residues 6-11 (IGAGQL) and Ser34 contribute to the NADP(+) site. NADPH is bound by residues Ala8, Gln10, Leu11, Ser34, Asp36, Asn56, Val70, Lys71, and Ala97. NADP(+) is bound by residues Asn56, 69–72 (AVKP), and 95–97 (CAA). An L-proline-binding site is contributed by Glu164. Asn230 lines the NADPH pocket. L-proline-binding residues include Ala237 and Thr238. Position 278 is a phosphoserine (Ser278). The tract at residues 292-320 (LDSPPGTSLAPSGHSKLLPRSMAPAGKQD) is disordered.

It belongs to the pyrroline-5-carboxylate reductase family. In terms of assembly, homodecamer; composed of 5 homodimers. Interacts with LTO1.

It is found in the mitochondrion. It carries out the reaction L-proline + NADP(+) = (S)-1-pyrroline-5-carboxylate + NADPH + 2 H(+). The enzyme catalyses L-proline + NAD(+) = (S)-1-pyrroline-5-carboxylate + NADH + 2 H(+). Its pathway is amino-acid biosynthesis; L-proline biosynthesis; L-proline from L-glutamate 5-semialdehyde: step 1/1. In terms of biological role, oxidoreductase that catalyzes the last step in proline biosynthesis, which corresponds to the reduction of pyrroline-5-carboxylate to L-proline using NAD(P)H. At physiologic concentrations, has higher specific activity in the presence of NADH. Involved in the cellular response to oxidative stress. The sequence is that of Pyrroline-5-carboxylate reductase 1, mitochondrial (PYCR1) from Bos taurus (Bovine).